The sequence spans 574 residues: Acyloxyacyl hydrolase (574 aa).

The signal sequence occupies residues 1–22 (MKFPWKVFKTTLLLLLLSHSLA). Residues 23 to 33 (SVPSEDQPGDS) constitute a propeptide that is removed on maturation. One can recognise a Saposin B-type domain in the interval 36–117 (HGQSCLGCVV…YALEFCKRGA (82 aa)). The tract at residues 37–69 (GQSCLGCVVLVSVIEQLAEVHNSSVQVAMERLC) is important for enzyme activity, localization to cytoplasmic vesicles, and protein stability. Intrachain disulfides connect Cys40–Cys113, Cys43–Cys107, Cys69–Cys82, Cys122–Cys452, Cys159–Cys168, Cys205–Cys229, Cys248–Cys328, and Cys375–Cys458. Asn58 is a glycosylation site (N-linked (GlcNAc...) asparagine). Residues 172–176 (ELSIK) form a lipopolysaccharide binding region. Residues Asp183, Asp185, Asp187, His189, Asp204, Asn206, Asp207, Asp209, Val212, Asp222, Asp226, Asn228, Asn230, Ile232, and Glu244 each coordinate Ca(2+). A glycan (N-linked (GlcNAc...) asparagine) is linked at Asn206. Residue Ser262 is part of the active site. N-linked (GlcNAc...) asparagine glycosylation is found at Asn408 and Asn465.

As to quaternary structure, heterodimer of the large and small subunits; disulfide-linked. Requires Ca(2+) as cofactor. In terms of processing, cleaved into a large and a small subunit. The small subunit is N-glycosylated. In terms of tissue distribution, detected in peritoneal macrophages (at protein level). Strongly expressed in kidney cortex, where it may be produced by proximal tubule cells. In liver, expressed at high levels in Kupffer cells. Expressed by dendritic cells. Detected at low levels in alveolar macrophages.

The protein resides in the secreted. The protein localises to the cytoplasmic vesicle. It carries out the reaction a 3-(acyloxy)acyl derivative of bacterial toxin + H2O = a 3-hydroxyacyl derivative of bacterial toxin + a fatty acid + H(+). In terms of biological role, removes the secondary (acyloxyacyl-linked) fatty acyl chains from the lipid A region of bacterial lipopolysaccharides (LPS). By breaking down LPS, terminates the host response to bacterial infection and prevents prolonged and damaging inflammatory responses. In peritoneal macrophages, seems to be important for recovery from a state of immune tolerance following infection by Gram-negative bacteria. This is Acyloxyacyl hydrolase from Mus musculus (Mouse).